A 147-amino-acid chain; its full sequence is Microsomal glutathione S-transferase 2 (147 aa).

Helical transmembrane passes span 6–26 (ILLA…ALQV), 59–79 (FYPI…QVFA), and 111–131 (SLGI…NSFL).

Belongs to the MAPEG family. As to quaternary structure, homotrimer. As to expression, liver, spleen, skeletal muscle, heart, adrenals, pancreas, prostate, testis, fetal liver, and fetal spleen. Very low expression in lung, brain, placenta and bone marrow. Abundantly expressed in human umbilical vein endothelial cells (at protein level).

Its subcellular location is the endoplasmic reticulum membrane. It localises to the microsome membrane. The enzyme catalyses RX + glutathione = an S-substituted glutathione + a halide anion + H(+). It carries out the reaction 1-chloro-2,4-dinitrobenzene + glutathione = 2,4-dinitrophenyl-S-glutathione + chloride + H(+). The catalysed reaction is leukotriene C4 = leukotriene A4 + glutathione. It catalyses the reaction (5S)-hydroperoxy-(6E,8Z,11Z,14Z)-eicosatetraenoate + 2 glutathione = (5S)-hydroxy-(6E,8Z,11Z,14Z)-eicosatetraenoate + glutathione disulfide + H2O. Its activity is regulated as follows. Each monomer can bind on GSH molecule but only one subunit is catalytically active. Its function is as follows. Catalyzes several different glutathione-dependent reactions. Catalyzes the glutathione-dependent reduction of lipid hydroperoxides, such as 5-HPETE. Has glutathione transferase activity, toward xenobiotic electrophiles, such as 1-chloro-2, 4-dinitrobenzene (CDNB). Also catalyzes the conjugation of leukotriene A4 with reduced glutathione to form leukotriene C4 (LTC4). Involved in oxidative DNA damage induced by ER stress and anticancer agents by activating LTC4 biosynthetic machinery in nonimmune cells. The polypeptide is Microsomal glutathione S-transferase 2 (MGST2) (Homo sapiens (Human)).